Reading from the N-terminus, the 208-residue chain is Photosystem I reaction center subunit II-1, chloroplastic (208 aa).

The transit peptide at methionine 1–alanine 45 directs the protein to the chloroplast. Threonine 48 bears the Phosphothreonine mark. The tract at residues aspartate 49 to leucine 72 is disordered. A compositionally biased stretch (low complexity) spans serine 50 to proline 64. Residues arginine 141–threonine 149 are ferredoxin and ferredoxin-oxidoreductase binding.

This sequence belongs to the PsaD family. In terms of assembly, interacts with PGRL1A and PGRL1B. In terms of processing, phosphorylated by a threonine specific thylakoid kinase in a light activated and redox-dependent manner.

The protein resides in the plastid. Its subcellular location is the chloroplast thylakoid membrane. Functionally, psaD can form complexes with ferredoxin and ferredoxin-oxidoreductase in photosystem I (PS I) reaction center. PSAD may encode the ferredoxin-docking protein. The polypeptide is Photosystem I reaction center subunit II-1, chloroplastic (psaD1) (Arabidopsis thaliana (Mouse-ear cress)).